The sequence spans 169 residues: Protein yop1 (169 aa).

Residues 1 to 35 lie on the Cytoplasmic side of the membrane; it reads MASFQDRAQHTIAQLDKELSKYPVLNNLERQTSVP. The chain crosses the membrane as a helical span at residues 36 to 55; that stretch reads KVYVILGLGGIYTFLVFFNI. Position 56 (alanine 56) is a topological domain, lumenal. Residues 57–76 traverse the membrane as a helical segment; that stretch reads GQLLVNLAGFILPTYYSLDA. Residues 77–88 lie on the Cytoplasmic side of the membrane; it reads LFSAGKADDTQW. A helical membrane pass occupies residues 89–103; the sequence is LTYWVVYAFFTVVES. Topologically, residues 104–105 are lumenal; the sequence is AI. The helical transmembrane segment at 106–124 threads the bilayer; the sequence is SAPYWFPFYYIFKFALVLW. The Cytoplasmic portion of the chain corresponds to 125 to 169; that stretch reads LALPQTNGAQIVFKSLVQPLVGRYFTGGSTSANLRAQADAATKSQ.

Belongs to the DP1 family. In terms of assembly, oligomer.

The protein localises to the endoplasmic reticulum membrane. It localises to the golgi apparatus membrane. Functionally, required to generate and maintain the structure of the tubular endoplasmic reticulum network and the vacuole. Induces high curvature in membranes and causes membrane tubule formation. Involved in membrane/vesicle trafficking. The polypeptide is Protein yop1 (yop1) (Emericella nidulans (strain FGSC A4 / ATCC 38163 / CBS 112.46 / NRRL 194 / M139) (Aspergillus nidulans)).